A 98-amino-acid polypeptide reads, in one-letter code: Pancreatic polypeptide prohormone (98 aa).

Positions 1–29 (MAVAYYCLSLFLLSTWVALLLQPLQGAWG) are cleaved as a signal peptide. Tyrosine amide is present on Tyr65.

It belongs to the NPY family. In terms of processing, no icosapeptide-like peptide is cleaved from the C-terminal.

It localises to the secreted. Hormone secreted by pancreatic cells that acts as a regulator of pancreatic and gastrointestinal functions probably by signaling through the G protein-coupled receptor NPY4R2. The polypeptide is Pancreatic polypeptide prohormone (Ppy) (Rattus norvegicus (Rat)).